The following is a 1401-amino-acid chain: DNA-directed RNA polymerase subunit beta'' (1401 aa).

Zn(2+) contacts are provided by Cys-224, Cys-295, Cys-302, and Cys-305.

This sequence belongs to the RNA polymerase beta' chain family. RpoC2 subfamily. In plastids the minimal PEP RNA polymerase catalytic core is composed of four subunits: alpha, beta, beta', and beta''. When a (nuclear-encoded) sigma factor is associated with the core the holoenzyme is formed, which can initiate transcription. Zn(2+) is required as a cofactor.

It localises to the plastid. The protein resides in the chloroplast. It carries out the reaction RNA(n) + a ribonucleoside 5'-triphosphate = RNA(n+1) + diphosphate. In terms of biological role, DNA-dependent RNA polymerase catalyzes the transcription of DNA into RNA using the four ribonucleoside triphosphates as substrates. The sequence is that of DNA-directed RNA polymerase subunit beta'' from Ipomoea purpurea (Common morning glory).